The chain runs to 409 residues: POU domain, class 4, transcription factor 2 (409 aa).

The interval 26-93 (YSALHSTSPG…SEAMRRACLP (68 aa)) is disordered. Residues 31-52 (STSPGSSAPIAPSASSPSSSSN) are compositionally biased toward low complexity. The segment covering 53–69 (AGGGGGGGGGGGGGGGR) has biased composition (gly residues). The segment at 91 to 237 (CLPTPPSNIF…MHQAALSMAH (147 aa)) is required for transcriptional activation. The POU-IV box signature appears at 110 to 119 (RAEALAAVDI). Low complexity predominate over residues 153–166 (AASSSSVPISHPSA). A disordered region spans residues 153–188 (AASSSSVPISHPSALAGTHHHHHHHHHHHHQPHQAL). Positions 170–184 (THHHHHHHHHHHHQP) are enriched in basic residues. The Nuclear speckle targeting signal signature appears at 171–185 (HHHHHHHHHHHHQPH). Residues 238–409 (AHGLPSHMGC…QKRMKYSAGI (172 aa)) are required for DNA-binding and transcriptional repression. In terms of domain architecture, POU-specific spans 250–327 (DVDADPRDLE…ILQAWLEEAE (78 aa)). The segment at residues 345–404 (KKRKRTSIAAPEKRSLEAYFAIQPRPSSEKIAAIAEKLDLKKNVVRVWFCNQRQKQKRMK) is a DNA-binding region (homeobox).

It belongs to the POU transcription factor family. Class-4 subfamily. In terms of assembly, interacts with POU4F1; this interaction inhibits both POU4F1 DNA-binding and transcriptional activities. Interacts (C-terminus) with ESR1 (via DNA-binding domain); this interaction increases the estrogen receptor ESR1 transcriptional activity in a DNA- and ligand 17-beta-estradiol-independent manner. Interacts (via C-terminus) with TP53 (via N-terminus). Interacts with DLX1 (via homeobox DNA-binding domain); this interaction suppresses DLX1-mediated transcriptional activity in postnatal retina enhancing retinal ganglion cell (RGC) differentiation. Interacts with DLX2 (via homeobox DNA-binding domain); this interaction enhances RGC differentiation. Interacts (via C-terminus) with ISL1 (via C-terminus). Interacts with ISL2. Interacts with LHX2. Expressed in the brain. Expressed in the ganglion cell layer of the retina.

It localises to the nucleus. The protein resides in the nucleus speckle. The protein localises to the cytoplasm. Tissue-specific DNA-binding transcription factor involved in the development and differentiation of target cells. Functions either as activator or repressor modulating the rate of target gene transcription through RNA polymerase II enzyme in a promoter-dependent manner. Binds to the consensus octamer motif 5'-AT[A/T]A[T/A]T[A/T]A-3' of promoter of target genes. Plays a fundamental role in the gene regulatory network essential for retinal ganglion cell (RGC) differentiation. Binds to an octamer site to form a ternary complex with ISL1; cooperates positively with ISL1 and ISL2 to potentiate transcriptional activation of RGC target genes being involved in RGC fate commitment in the developing retina and RGC axon formation and pathfinding. Inhibits DLX1 and DLX2 transcriptional activities preventing DLX1- and DLX2-mediated ability to promote amacrine cell fate specification. In cooperation with TP53 potentiates transcriptional activation of BAX promoter activity increasing neuronal cell apoptosis. Negatively regulates BAX promoter activity in the absence of TP53. Acts as a transcriptional coactivator via its interaction with the transcription factor ESR1 by enhancing its effect on estrogen response element (ERE)-containing promoter. Antagonizes the transcriptional stimulatory activity of POU4F1 by preventing its binding to an octamer motif. Involved in TNFSF11-mediated terminal osteoclast differentiation. The sequence is that of POU domain, class 4, transcription factor 2 from Homo sapiens (Human).